The sequence spans 401 residues: Probable E3 ubiquitin-protein ligase RHC2A (401 aa).

Residues 41-93 (TPSDSFTTTTTTQHRSPTRFPPPSSSSSTPSASMHADNSPTPTIVTRTRSNRS) are disordered. A compositionally biased stretch (polar residues) spans 76–93 (ADNSPTPTIVTRTRSNRS). The RING-type; atypical zinc-finger motif lies at 201-242 (CAVCKENFVLKSSAREMPCNHIYHPDCILPWLAIRNSCPVCR).

The catalysed reaction is S-ubiquitinyl-[E2 ubiquitin-conjugating enzyme]-L-cysteine + [acceptor protein]-L-lysine = [E2 ubiquitin-conjugating enzyme]-L-cysteine + N(6)-ubiquitinyl-[acceptor protein]-L-lysine.. The protein operates within protein modification; protein ubiquitination. Its function is as follows. Probable E3 ubiquitin-protein ligase that may possess E3 ubiquitin ligase activity in vitro. This Arabidopsis thaliana (Mouse-ear cress) protein is Probable E3 ubiquitin-protein ligase RHC2A.